Reading from the N-terminus, the 215-residue chain is Peroxiredoxin (215 aa).

The Thioredoxin domain maps to P6 to T161. The active-site Cysteine sulfenic acid (-SOH) intermediate is the C48. R124 contributes to the substrate binding site. A disulfide bridge links C205 with C211.

The protein belongs to the peroxiredoxin family. Prx6 subfamily. As to quaternary structure, homodecamer. Pentamer of dimers that assemble into a ring structure.

It localises to the cytoplasm. It catalyses the reaction a hydroperoxide + [thioredoxin]-dithiol = an alcohol + [thioredoxin]-disulfide + H2O. In terms of biological role, thiol-specific peroxidase that catalyzes the reduction of hydrogen peroxide and organic hydroperoxides to water and alcohols, respectively. Plays a role in cell protection against oxidative stress by detoxifying peroxides. This Thermotoga maritima (strain ATCC 43589 / DSM 3109 / JCM 10099 / NBRC 100826 / MSB8) protein is Peroxiredoxin.